A 199-amino-acid polypeptide reads, in one-letter code: Dephospho-CoA kinase (199 aa).

Residues 2–199 (KIAVTGGYSS…FVADRIEKKK (198 aa)) form the DPCK domain. Residue 10–15 (SSGKSS) participates in ATP binding.

This sequence belongs to the CoaE family.

Its subcellular location is the cytoplasm. The enzyme catalyses 3'-dephospho-CoA + ATP = ADP + CoA + H(+). It functions in the pathway cofactor biosynthesis; coenzyme A biosynthesis; CoA from (R)-pantothenate: step 5/5. Catalyzes the phosphorylation of the 3'-hydroxyl group of dephosphocoenzyme A to form coenzyme A. The polypeptide is Dephospho-CoA kinase (Desulfotalea psychrophila (strain LSv54 / DSM 12343)).